The primary structure comprises 227 residues: MKFAVIVLPGSNCDIDMYHAVKDELGHEVEYVWHEETSLDGFDGVLIPGGFSYGDYLRCGAIARFANIMPAVKQAAAEGKPVLGVCNGFQILQELGLLPGAMRRNKDLKFICRPVELIVQNDETLFTASYEKGESITIPVAHGEGNFYCDDETLATLKENNQIAFTYGSNINGSVSDIAGVVNEKGNVLGMMPHPERAVDELLGSADGLKLFQSIVKNWRETHVTTA.

The region spanning phenylalanine 3–threonine 225 is the Glutamine amidotransferase type-1 domain. Cysteine 86 functions as the Nucleophile in the catalytic mechanism. Catalysis depends on residues histidine 194 and glutamate 196.

As to quaternary structure, part of the FGAM synthase complex composed of 1 PurL, 1 PurQ and 2 PurS subunits.

It localises to the cytoplasm. The enzyme catalyses N(2)-formyl-N(1)-(5-phospho-beta-D-ribosyl)glycinamide + L-glutamine + ATP + H2O = 2-formamido-N(1)-(5-O-phospho-beta-D-ribosyl)acetamidine + L-glutamate + ADP + phosphate + H(+). It carries out the reaction L-glutamine + H2O = L-glutamate + NH4(+). It functions in the pathway purine metabolism; IMP biosynthesis via de novo pathway; 5-amino-1-(5-phospho-D-ribosyl)imidazole from N(2)-formyl-N(1)-(5-phospho-D-ribosyl)glycinamide: step 1/2. Its function is as follows. Part of the phosphoribosylformylglycinamidine synthase complex involved in the purines biosynthetic pathway. Catalyzes the ATP-dependent conversion of formylglycinamide ribonucleotide (FGAR) and glutamine to yield formylglycinamidine ribonucleotide (FGAM) and glutamate. The FGAM synthase complex is composed of three subunits. PurQ produces an ammonia molecule by converting glutamine to glutamate. PurL transfers the ammonia molecule to FGAR to form FGAM in an ATP-dependent manner. PurS interacts with PurQ and PurL and is thought to assist in the transfer of the ammonia molecule from PurQ to PurL. The polypeptide is Phosphoribosylformylglycinamidine synthase subunit PurQ (Bacillus subtilis (strain 168)).